The following is a 317-amino-acid chain: uncharacterized protein (317 aa).

A helical membrane pass occupies residues 11–31; it reads ALLLVIFGSLIVSFAIFFMVL. PASTA domains follow at residues 33–100, 101–174, and 180–241; these read NNEI…FISK, GAII…LISK, and DKHV…TIAK.

The protein localises to the membrane. This is an uncharacterized protein from Borreliella burgdorferi (strain ATCC 35210 / DSM 4680 / CIP 102532 / B31) (Borrelia burgdorferi).